A 67-amino-acid polypeptide reads, in one-letter code: Large ribosomal subunit protein eL24 (67 aa).

Zn(2+) is bound by residues Cys-7, Cys-10, Cys-33, and Cys-37. The C4-type zinc-finger motif lies at 7–37 (CSYCGKEFEPGTGKMYVRNDGRVYFFCSRKC).

It belongs to the eukaryotic ribosomal protein eL24 family. Part of the 50S ribosomal subunit. Forms a cluster with proteins L3 and L14. Zn(2+) serves as cofactor.

Its function is as follows. Binds to the 23S rRNA. In Thermococcus sibiricus (strain DSM 12597 / MM 739), this protein is Large ribosomal subunit protein eL24.